The chain runs to 579 residues: Protein disulfide isomerase-like 1-3 (579 aa).

An N-terminal signal peptide occupies residues 1–25 (MASSSTSISLLLFVSFILLLVNSRA). N-linked (GlcNAc...) asparagine glycosylation occurs at N27. Basic and acidic residues-rich tracts occupy residues 44-69 (EESK…RDFE) and 80-89 (EFHHGDHGYE). The segment at 44–91 (EESKEQSHGGGSYHEEEHDHQHRDFENYDDLEQGGGEFHHGDHGYEEE) is disordered. The Thioredoxin 1 domain occupies 81–204 (FHHGDHGYEE…IVTWLKKKAS (124 aa)). N108 and N115 each carry an N-linked (GlcNAc...) asparagine glycan. Catalysis depends on nucleophile residues C128 and C131. Residues C128 and C131 are joined by a disulfide bond. N209, N293, N313, and N338 each carry an N-linked (GlcNAc...) asparagine glycan. In terms of domain architecture, Thioredoxin 2 spans 416–546 (DFLADKLKPF…LYKFLKKHAS (131 aa)). Active-site nucleophile residues include C467 and C470. C467 and C470 are joined by a disulfide. An N-linked (GlcNAc...) asparagine glycan is attached at N520. Positions 558–579 (EPVISTMKSDEKIEGDSSKDEL) are disordered. Residues 565-579 (KSDEKIEGDSSKDEL) are compositionally biased toward basic and acidic residues. The short motif at 576 to 579 (KDEL) is the Prevents secretion from ER element.

It belongs to the protein disulfide isomerase family. In terms of tissue distribution, widely expressed.

It is found in the endoplasmic reticulum lumen. The enzyme catalyses Catalyzes the rearrangement of -S-S- bonds in proteins.. Functionally, acts as a protein-folding catalyst that interacts with nascent polypeptides to catalyze the formation, isomerization, and reduction or oxidation of disulfide bonds. This chain is Protein disulfide isomerase-like 1-3 (PDIL1-3), found in Arabidopsis thaliana (Mouse-ear cress).